The following is a 275-amino-acid chain: Peflin (275 aa).

A run of 8 repeats spans residues Pro-21–Pro-29, His-31–Gly-39, Pro-41–Pro-49, Ala-50–Ser-59, Ala-60–Pro-68, Pro-76–Leu-84, Pro-85–Gly-91, and Thr-92–Gly-100. Disordered regions lie at residues Pro-21–Gly-45 and Ser-59–Pro-103. The interval Pro-21–Gly-100 is 8 X 9 AA approximate tandem repeat of [AP]-P-G-G-P-Y-G-G-P-P. Positions His-31–Gly-45 are enriched in gly residues. Over residues Ser-59–Gly-70 the composition is skewed to low complexity. EF-hand domains follow at residues Asn-105–Ser-140, Thr-146–Leu-174, Lys-172–Asn-207, Leu-208–Leu-244, and Thr-245–Met-274. 5 residues coordinate Ca(2+): Asp-118, Asp-120, Ser-122, Tyr-124, and Glu-129. Ca(2+) contacts are provided by Asp-185, Asp-187, Ser-189, Ser-191, and Glu-196. The required for interaction with PDCD6 stretch occupies residues Thr-195–Leu-275.

As to quaternary structure, heterodimer; heterodimerizes (via the EF-hand 5) with PDCD6. Dissociates from PDCD6 in presence of calcium. Post-translationally, ubiquitinated by the BCR(KLHL12) E3 ubiquitin ligase complex.

The protein localises to the cytoplasm. Its subcellular location is the endoplasmic reticulum. It is found in the membrane. It localises to the cytoplasmic vesicle. The protein resides in the COPII-coated vesicle membrane. Functionally, calcium-binding protein that acts as an adapter that bridges unrelated proteins or stabilizes weak protein-protein complexes in response to calcium. Together with PDCD6, acts as a calcium-dependent adapter for the BCR(KLHL12) complex, a complex involved in endoplasmic reticulum (ER)-Golgi transport by regulating the size of COPII coats. In response to cytosolic calcium increase, the heterodimer formed with PDCD6 interacts with, and bridges together the BCR(KLHL12) complex and SEC31 (SEC31A or SEC31B), promoting monoubiquitination of SEC31 and subsequent collagen export, which is required for neural crest specification. Its role in the heterodimer formed with PDCD6 is however unclear: some evidence shows that PEF1 and PDCD6 work together and promote association between PDCD6 and SEC31 in presence of calcium. Other reports show that PEF1 dissociates from PDCD6 in presence of calcium, and may act as a negative regulator of PDCD6. Also acts as a negative regulator of ER-Golgi transport; possibly by inhibiting interaction between PDCD6 and SEC31. The protein is Peflin of Mus musculus (Mouse).